Here is a 354-residue protein sequence, read N- to C-terminus: MSGLNGFEGDNFYIPMSNRTGLVRDPFVYEQYYLAEPWQFKLLACYMFFLICLGLPINGFTLFVTAQHKKLQQPLNFILVNLAVAGMIMVCFGFTITISSAVNGYFYFGPTACAIEGFMATLGGEVALWSLVVLAIERYIVVCKPMGSFKFSASHALGGIGFTWFMAMTCAAPPLVGWSRYIPEGLQCSCGPDYYTLNPKYNNESYVIYMFVVHFIVPVTVIFFTYGRLVCTVKSAAAAQQDSASTQKAEKEVTRMVILMVVGFLVAWTPYATVAAWIFFNKGAAFTAQFMAVPAFFSKSSALFNPIIYVLLNKQFRNCMLTTLFCGKNPLGDEESSTVSTKTEVSTVSSVSPA.

The Extracellular portion of the chain corresponds to 1-39; the sequence is MSGLNGFEGDNFYIPMSNRTGLVRDPFVYEQYYLAEPWQ. Asn18 carries an N-linked (GlcNAc...) asparagine glycan. The helical transmembrane segment at 40–64 threads the bilayer; it reads FKLLACYMFFLICLGLPINGFTLFV. Topologically, residues 65–76 are cytoplasmic; that stretch reads TAQHKKLQQPLN. The helical transmembrane segment at 77–102 threads the bilayer; that stretch reads FILVNLAVAGMIMVCFGFTITISSAV. Residues 103–116 are Extracellular-facing; that stretch reads NGYFYFGPTACAIE. Cysteines 113 and 190 form a disulfide. Residues 117–136 traverse the membrane as a helical segment; that stretch reads GFMATLGGEVALWSLVVLAI. Residues 137–155 are Cytoplasmic-facing; the sequence is ERYIVVCKPMGSFKFSASH. Residues 156–179 form a helical membrane-spanning segment; it reads ALGGIGFTWFMAMTCAAPPLVGWS. Residues 180–205 are Extracellular-facing; the sequence is RYIPEGLQCSCGPDYYTLNPKYNNES. An N-linked (GlcNAc...) asparagine glycan is attached at Asn203. A helical membrane pass occupies residues 206–233; sequence YVIYMFVVHFIVPVTVIFFTYGRLVCTV. Over 234 to 255 the chain is Cytoplasmic; sequence KSAAAAQQDSASTQKAEKEVTR. A helical transmembrane segment spans residues 256 to 279; sequence MVILMVVGFLVAWTPYATVAAWIF. Over 280–287 the chain is Extracellular; it reads FNKGAAFT. The helical transmembrane segment at 288 to 312 threads the bilayer; it reads AQFMAVPAFFSKSSALFNPIIYVLL. Lys299 carries the N6-(retinylidene)lysine modification. Residues 313-354 lie on the Cytoplasmic side of the membrane; the sequence is NKQFRNCMLTTLFCGKNPLGDEESSTVSTKTEVSTVSSVSPA.

This sequence belongs to the G-protein coupled receptor 1 family. Opsin subfamily. The color pigments are found in the cone photoreceptor cells.

It localises to the membrane. Its function is as follows. Visual pigments are the light-absorbing molecules that mediate vision. They consist of an apoprotein, opsin, covalently linked to cis-retinal. This chain is Green-sensitive opsin-3 (RH11), found in Psalidodon fasciatus (Banded astyanax).